The chain runs to 62 residues: Small ribosomal subunit protein bS21 (62 aa).

Positions 43 to 52 are enriched in basic and acidic residues; sequence VKKKLKSEAA. Residues 43–62 form a disordered region; the sequence is VKKKLKSEAARKRKNRRRFK. Residues 53 to 62 show a composition bias toward basic residues; the sequence is RKRKNRRRFK.

It belongs to the bacterial ribosomal protein bS21 family.

The sequence is that of Small ribosomal subunit protein bS21 from Lactiplantibacillus plantarum (strain ATCC BAA-793 / NCIMB 8826 / WCFS1) (Lactobacillus plantarum).